The chain runs to 278 residues: MPELPEVEVTRLGIAPHLEGRKVSAVKIIDGRLRWPVPANLTKTLPGQTVNGIERRGKYLLLEMDTGYLLIHLGMTGTLRVLPSSDPLKTHDRVTLEFGKLSLRLHDPRKFGAVLWHPKSKGPIKKFILLQKLGVEPFSSEFSGELGAEILYQTSRKRSVAVKQFLLAGQAVVGVGNIYCSESLFEAGIHPAKAAGKLTRPQCSRLAKAVRSILKKAIEAGGSSLKDFVNSDGDPGHFMVQTKVYDRKGLPCKVCKTPISQMVQGQRTTYFCSQCQKR.

The active-site Schiff-base intermediate with DNA is Pro-2. The Proton donor role is filled by Glu-3. Residue Lys-58 is the Proton donor; for beta-elimination activity of the active site. DNA-binding residues include His-91, Arg-109, and Arg-158. The FPG-type zinc-finger motif lies at 243-277 (KVYDRKGLPCKVCKTPISQMVQGQRTTYFCSQCQK). Arg-267 (proton donor; for delta-elimination activity) is an active-site residue.

Belongs to the FPG family. As to quaternary structure, monomer. Requires Zn(2+) as cofactor.

It catalyses the reaction Hydrolysis of DNA containing ring-opened 7-methylguanine residues, releasing 2,6-diamino-4-hydroxy-5-(N-methyl)formamidopyrimidine.. The enzyme catalyses 2'-deoxyribonucleotide-(2'-deoxyribose 5'-phosphate)-2'-deoxyribonucleotide-DNA = a 3'-end 2'-deoxyribonucleotide-(2,3-dehydro-2,3-deoxyribose 5'-phosphate)-DNA + a 5'-end 5'-phospho-2'-deoxyribonucleoside-DNA + H(+). Involved in base excision repair of DNA damaged by oxidation or by mutagenic agents. Acts as a DNA glycosylase that recognizes and removes damaged bases. Has a preference for oxidized purines, such as 7,8-dihydro-8-oxoguanine (8-oxoG). Has AP (apurinic/apyrimidinic) lyase activity and introduces nicks in the DNA strand. Cleaves the DNA backbone by beta-delta elimination to generate a single-strand break at the site of the removed base with both 3'- and 5'-phosphates. This is Formamidopyrimidine-DNA glycosylase from Polynucleobacter necessarius subsp. necessarius (strain STIR1).